We begin with the raw amino-acid sequence, 117 residues long: MITKQSSNALRKKRHLRLRKIVSGTSQRPRLNVFRSNKFLYVQIIDDTKQTTLCSANSKEANVWGSNIKAAEAVGALIAKKALSQGIKNVVFDRSGYFYHGKIKALADACRKSGLHF.

The protein belongs to the universal ribosomal protein uL18 family. Part of the 50S ribosomal subunit; part of the 5S rRNA/L5/L18/L25 subcomplex. Contacts the 5S and 23S rRNAs.

Its function is as follows. This is one of the proteins that bind and probably mediate the attachment of the 5S RNA into the large ribosomal subunit, where it forms part of the central protuberance. This chain is Large ribosomal subunit protein uL18, found in Aster yellows witches'-broom phytoplasma (strain AYWB).